The chain runs to 459 residues: MDPSQHNPPVGHQIVHVRGDSETDLEALFNAVMNPKGAVVPQSVPMRMRKLPDSFFKPPEPKSHSRQASTDAGSGGVLTPHHVRAHSSPASLQLGAVSGGSLSGMASAGASPQHLRQSSYEIPDDVPLPPGWEMAKTSSGQRYFLNHIDQTTTWQDPRKALLQLNQATPPSTVPVQQQNLLSPASGPLPEGWEQAITPEGEIYYINHKNKTTSWLDPRLETRYALNQQRITQSAPVKQGGPLPPNPHGGVMGGNNQMRLQQMEKERIRLKQQELLRQSQRPQIDLQPSTANQDAEHCDELALRNQLPTSMDQDGSSNPVSSPMAQDARTMTANSNDPFLNSVSSGTYHSRDESTDSGLSMSSYSVPRTPDDFLNSVDEMDTGDPLAPSMATQPSRFPDYLDTIPGTDVDLGTLEGESMAVEGEELMPSLQEALSSDILNDMESVLAATKIDKESFLTWL.

Phosphoserine; by LATS1 and LATS2 is present on residues serine 21, serine 69, serine 87, and serine 119. 2 disordered regions span residues 51 to 88 (LPDS…AHSS) and 103 to 129 (SGMA…VPLP). WW domains are found at residues 126-159 (VPLP…DPRK) and 186-219 (GPLP…DPRL). Disordered stretches follow at residues 231-254 (TQSA…MGGN) and 307-364 (PTSM…SSYS). The tract at residues 247 to 459 (HGGVMGGNNQ…IDKESFLTWL (213 aa)) is transactivation domain. Composition is skewed to polar residues over residues 307 to 347 (PTSM…SGTY) and 355 to 364 (DSGLSMSSYS).

It belongs to the YAP1 family. Phosphorylated by lats1 and lats2; leading to cytoplasmic translocation and inactivation. In terms of tissue distribution, ubiquitously expressed throughout development.

The protein resides in the cytoplasm. Its subcellular location is the nucleus. It localises to the cell junction. It is found in the tight junction. The protein localises to the cell membrane. In terms of biological role, transcriptional regulator which can act both as a coactivator and a corepressor and is the critical downstream regulatory target in the Hippo signaling pathway that plays a pivotal role in organ size control and tumor suppression by restricting proliferation and promoting apoptosis. Plays a key role in tissue tension and 3D tissue shape by regulating cortical actomyosin network formation. In Oryzias latipes (Japanese rice fish), this protein is Transcriptional coactivator YAP1.